The following is a 336-amino-acid chain: Dihydroorotate dehydrogenase (quinone) (336 aa).

FMN-binding positions include 62–66 (AGLDK) and Thr86. Lys66 is a binding site for substrate. Residue 111-115 (NRMGF) participates in substrate binding. The FMN site is built by Asn139 and Asn172. Residue Asn172 coordinates substrate. The Nucleophile role is filled by Ser175. A substrate-binding site is contributed by Asn177. Residues Lys217 and Thr245 each contribute to the FMN site. 246 to 247 (NT) is a substrate binding site. FMN is bound by residues Gly268, Gly297, and 318 to 319 (YS).

The protein belongs to the dihydroorotate dehydrogenase family. Type 2 subfamily. In terms of assembly, monomer. The cofactor is FMN.

The protein resides in the cell membrane. The catalysed reaction is (S)-dihydroorotate + a quinone = orotate + a quinol. Its pathway is pyrimidine metabolism; UMP biosynthesis via de novo pathway; orotate from (S)-dihydroorotate (quinone route): step 1/1. Catalyzes the conversion of dihydroorotate to orotate with quinone as electron acceptor. This chain is Dihydroorotate dehydrogenase (quinone), found in Aeromonas salmonicida (strain A449).